The chain runs to 362 residues: Molybdenum import ATP-binding protein ModC (362 aa).

In terms of domain architecture, ABC transporter spans 2–236 (VSPIEVRLQM…LDLPLAMGDD (235 aa)). An ATP-binding site is contributed by 34-41 (GPSGSGKT). In terms of domain architecture, Mop spans 297–362 (HSSILNRLPV…AQIKAVAVLA (66 aa)).

Belongs to the ABC transporter superfamily. Molybdate importer (TC 3.A.1.8) family. As to quaternary structure, the complex is composed of two ATP-binding proteins (ModC), two transmembrane proteins (ModB) and a solute-binding protein (ModA).

The protein localises to the cell inner membrane. The catalysed reaction is molybdate(out) + ATP + H2O = molybdate(in) + ADP + phosphate + H(+). In terms of biological role, part of the ABC transporter complex ModABC involved in molybdenum import. Responsible for energy coupling to the transport system. The protein is Molybdenum import ATP-binding protein ModC of Pseudomonas syringae pv. tomato (strain ATCC BAA-871 / DC3000).